The chain runs to 1597 residues: Rho guanine nucleotide exchange factor 5 (1597 aa).

Disordered regions lie at residues 138–246 (PFSS…EGTL), 258–455 (EEQM…SLEP), and 467–1072 (GSFL…VFRE). Ser-184 carries the phosphoserine modification. Residues 192-204 (ETNQNEGSESGTI) are compositionally biased toward polar residues. The segment covering 217 to 237 (ESQGLLHPQEVQVLEEQGQQE) has biased composition (low complexity). The span at 266 to 278 (NDEKGEQKQKQEQ) shows a compositional bias: basic and acidic residues. Residues 299 to 309 (GLNDGEWEQED) are compositionally biased toward acidic residues. Composition is skewed to basic and acidic residues over residues 323–368 (GEER…KEKG) and 394–404 (RSREEENEHHG). The span at 428–438 (LMTQIPGTQTE) shows a compositional bias: polar residues. Phosphoserine occurs at positions 445 and 450. Over residues 474–490 (SPDKEIDQNSQQEESRL) the composition is skewed to basic and acidic residues. Positions 512 to 522 (PRTPDSAPPSP) are enriched in pro residues. 2 stretches are compositionally biased toward polar residues: residues 583–601 (STGT…TVQH) and 655–682 (DYST…NLER). Residues 731 to 746 (QRRDTHPSVVETDGHA) are compositionally biased toward basic and acidic residues. Pro residues-rich tracts occupy residues 812-828 (PLPP…PPIS) and 838-856 (PLPP…PLPP). At Arg-866 the chain carries Asymmetric dimethylarginine. Residues 901-920 (ATARSTESFTSTSRSKSEVS) are compositionally biased toward low complexity. The span at 926–941 (SNMTNFLCPSSPTTPW) shows a compositional bias: polar residues. The segment covering 950–969 (SKDEAGVSEHPEAPAREPLR) has biased composition (basic and acidic residues). A phosphoserine mark is found at Ser-983, Ser-1011, and Ser-1044. Residues 990 to 1012 (QPEKPSHLHLEKASSWPHRRDSG) show a composition bias toward basic and acidic residues. Positions 1057–1072 (AVEKHPGPSDTVVFRE) are enriched in basic and acidic residues. Ser-1126 carries the post-translational modification Phosphoserine. A DH domain is found at 1174–1358 (KLQEVKFELI…EQLIRDCNNN (185 aa)). The PH domain occupies 1390 to 1502 (WLVKSGELTA…WISALAMPRE (113 aa)). Residues 1510–1571 (YNSPQVQCLR…PVQQVEFISN (62 aa)) enclose the SH3 domain.

Interacts with SRC. Forms a ternary complex with SRC and the PI3K 85 kDa subunit. Interacts with and is activated by the heterodimer formed by GNB1 and GNG2. Interacts with ODAM (via C-terminus). Interacts with RHOA. In terms of processing, activation of SRC induces tyrosine phosphorylation of ARHGEF5. As to expression, ubiquitously expressed with highest levels in placenta. High levels are also found in colon, kidney, trachea, prostate, liver, pancreas, pituitary gland, thyroid gland and mammary gland. In fetal tissues, expressed at high levels in kidney, lung and liver. Expressed at low levels in lung and heart.

Its subcellular location is the cytoplasm. It is found in the nucleus. It localises to the cell projection. The protein resides in the podosome. Guanine nucleotide exchange factor which activates Rho GTPases. Strongly activates RHOA. Also strongly activates RHOB, weakly activates RHOC and RHOG and shows no effect on RHOD, RHOV, RHOQ or RAC1. Involved in regulation of cell shape and actin cytoskeletal organization. Plays a role in actin organization by generating a loss of actin stress fibers and the formation of membrane ruffles and filopodia. Required for SRC-induced podosome formation. Involved in positive regulation of immature dendritic cell migration. This Homo sapiens (Human) protein is Rho guanine nucleotide exchange factor 5 (ARHGEF5).